Consider the following 819-residue polypeptide: ATP-dependent DNA helicase PIF4 (819 aa).

Residues 1-84 (MLLNSTRTLL…RQASSAGHND (84 aa)) constitute a mitochondrion transit peptide. The disordered stretch occupies residues 76–101 (QASSAGHNDLGLQEKEKSSGDESAFS). 126–133 (GGAGVGKS) lines the ATP pocket. The DNA-binding element occupies 734–754 (HIIYVAASRVKKFSQLRMINV).

This sequence belongs to the helicase family. PIF1 subfamily. Monomer. Mg(2+) is required as a cofactor.

It is found in the mitochondrion matrix. The protein resides in the kinetoplast. The catalysed reaction is Couples ATP hydrolysis with the unwinding of duplex DNA at the replication fork by translocating in the 5'-3' direction. This creates two antiparallel DNA single strands (ssDNA). The leading ssDNA polymer is the template for DNA polymerase III holoenzyme which synthesizes a continuous strand.. The enzyme catalyses ATP + H2O = ADP + phosphate + H(+). In terms of biological role, DNA-dependent ATPase and 5'-3' DNA helicase required for the maintenance of mitochondrial (kinetoplast) genome stability. This chain is ATP-dependent DNA helicase PIF4, found in Trypanosoma brucei brucei (strain 927/4 GUTat10.1).